Consider the following 696-residue polypeptide: DNA ligase (696 aa).

Residues aspartate 36–aspartate 40, serine 85–leucine 86, and glutamate 124 contribute to the NAD(+) site. Catalysis depends on lysine 126, which acts as the N6-AMP-lysine intermediate. 4 residues coordinate NAD(+): arginine 147, glutamate 184, lysine 308, and lysine 332. Positions 426, 429, 444, and 449 each coordinate Zn(2+). Residues glutamine 618 to serine 696 enclose the BRCT domain.

Belongs to the NAD-dependent DNA ligase family. LigA subfamily. It depends on Mg(2+) as a cofactor. Requires Mn(2+) as cofactor.

It catalyses the reaction NAD(+) + (deoxyribonucleotide)n-3'-hydroxyl + 5'-phospho-(deoxyribonucleotide)m = (deoxyribonucleotide)n+m + AMP + beta-nicotinamide D-nucleotide.. In terms of biological role, DNA ligase that catalyzes the formation of phosphodiester linkages between 5'-phosphoryl and 3'-hydroxyl groups in double-stranded DNA using NAD as a coenzyme and as the energy source for the reaction. It is essential for DNA replication and repair of damaged DNA. In Prochlorococcus marinus (strain MIT 9303), this protein is DNA ligase.